The primary structure comprises 164 residues: Transcription antitermination protein NusB (164 aa).

It belongs to the NusB family.

Its function is as follows. Involved in transcription antitermination. Required for transcription of ribosomal RNA (rRNA) genes. Binds specifically to the boxA antiterminator sequence of the ribosomal RNA (rrn) operons. This chain is Transcription antitermination protein NusB, found in Chlorobium limicola (strain DSM 245 / NBRC 103803 / 6330).